A 242-amino-acid polypeptide reads, in one-letter code: ATP synthase subunit 4, mitochondrial (242 aa).

A mitochondrion-targeting transit peptide spans 1–35; the sequence is MSFRALTMRSAVARTALNNTIRSARVATPYLGIRH.

Belongs to the eukaryotic ATPase B chain family. As to quaternary structure, F-type ATPases have 2 components, CF(1) - the catalytic core - and CF(0) - the membrane proton channel. In yeast, the dimeric form of ATP synthase consists of 17 polypeptides: alpha, beta, gamma, delta, epsilon, 4 (B), 5 (OSCP), 6 (A), 8, 9 (C), d, E (Tim11), f, g, h, i/j and k.

It is found in the mitochondrion. The protein resides in the mitochondrion inner membrane. In terms of biological role, mitochondrial membrane ATP synthase (F(1)F(0) ATP synthase or Complex V) produces ATP from ADP in the presence of a proton gradient across the membrane which is generated by electron transport complexes of the respiratory chain. F-type ATPases consist of two structural domains, F(1) - containing the extramembraneous catalytic core, and F(0) - containing the membrane proton channel, linked together by a central stalk and a peripheral stalk. During catalysis, ATP synthesis in the catalytic domain of F(1) is coupled via a rotary mechanism of the central stalk subunits to proton translocation. Part of the complex F(0) domain and the peripheric stalk, which acts as a stator to hold the catalytic alpha(3)beta(3) subcomplex and subunit a/ATP6 static relative to the rotary elements. In Candida glabrata (strain ATCC 2001 / BCRC 20586 / JCM 3761 / NBRC 0622 / NRRL Y-65 / CBS 138) (Yeast), this protein is ATP synthase subunit 4, mitochondrial (ATP4).